The sequence spans 345 residues: MKALVKAKREEGIWMQHDVPVPEVGVHDVMIRVTKSAICGTDVHIYNWDEWSQKTVPVPMVVGHEYVGRVEKVGAEVEAFRPGERVSGEGHVTCGFCRNCRAGRRHLCRHTVGVGVNRPGSFAEYVVIPADNVYRIPDDIPDDIAAIFDPFGNATHTALSFDLVGEDVLVTGAGPIGVMAAAIARHVGARHVVVTDVNDYRLDLARRMGASRAVNVAKEDLRAVMSELGMREGFDVGLEMSGNGRAFRQLLEVMNHGGKVALLGIMAGPEPIDWSQVVFKGLQLKGVYGREMYETWYKMVAMLQSGLDLTAVVTHRFSIDDFQQGFDVMRSGRSGKVVLDWGAAR.

C39 is a binding site for Zn(2+). Active-site charge relay system residues include T41 and H44. Zn(2+)-binding residues include H64, E65, C94, C97, C100, and C108. NAD(+)-binding positions include I176, D196, R201, 263–265 (LGI), and 287–288 (VY).

This sequence belongs to the zinc-containing alcohol dehydrogenase family. Homotetramer. It depends on Zn(2+) as a cofactor.

The protein localises to the cytoplasm. It catalyses the reaction L-threonine + NAD(+) = (2S)-2-amino-3-oxobutanoate + NADH + H(+). Its pathway is amino-acid degradation; L-threonine degradation via oxydo-reductase pathway; glycine from L-threonine: step 1/2. Functionally, catalyzes the NAD(+)-dependent oxidation of L-threonine to 2-amino-3-ketobutyrate. This chain is L-threonine 3-dehydrogenase, found in Anaeromyxobacter dehalogenans (strain 2CP-1 / ATCC BAA-258).